A 315-amino-acid chain; its full sequence is 4-hydroxy-3-methylbut-2-enyl diphosphate reductase (315 aa).

C12 is a [4Fe-4S] cluster binding site. (2E)-4-hydroxy-3-methylbut-2-enyl diphosphate-binding residues include H41 and H74. The dimethylallyl diphosphate site is built by H41 and H74. Residues H41 and H74 each coordinate isopentenyl diphosphate. C96 contacts [4Fe-4S] cluster. H124 is a (2E)-4-hydroxy-3-methylbut-2-enyl diphosphate binding site. Dimethylallyl diphosphate is bound at residue H124. H124 serves as a coordination point for isopentenyl diphosphate. E126 functions as the Proton donor in the catalytic mechanism. (2E)-4-hydroxy-3-methylbut-2-enyl diphosphate is bound at residue T167. [4Fe-4S] cluster is bound at residue C197. Positions 225, 226, 227, and 269 each coordinate (2E)-4-hydroxy-3-methylbut-2-enyl diphosphate. Positions 225, 226, 227, and 269 each coordinate dimethylallyl diphosphate. 4 residues coordinate isopentenyl diphosphate: S225, S226, N227, and S269.

It belongs to the IspH family. As to quaternary structure, homodimer. The cofactor is [4Fe-4S] cluster.

It carries out the reaction isopentenyl diphosphate + 2 oxidized [2Fe-2S]-[ferredoxin] + H2O = (2E)-4-hydroxy-3-methylbut-2-enyl diphosphate + 2 reduced [2Fe-2S]-[ferredoxin] + 2 H(+). The catalysed reaction is dimethylallyl diphosphate + 2 oxidized [2Fe-2S]-[ferredoxin] + H2O = (2E)-4-hydroxy-3-methylbut-2-enyl diphosphate + 2 reduced [2Fe-2S]-[ferredoxin] + 2 H(+). It functions in the pathway isoprenoid biosynthesis; dimethylallyl diphosphate biosynthesis; dimethylallyl diphosphate from (2E)-4-hydroxy-3-methylbutenyl diphosphate: step 1/1. Its pathway is isoprenoid biosynthesis; isopentenyl diphosphate biosynthesis via DXP pathway; isopentenyl diphosphate from 1-deoxy-D-xylulose 5-phosphate: step 6/6. In terms of biological role, catalyzes the conversion of 1-hydroxy-2-methyl-2-(E)-butenyl 4-diphosphate (HMBPP) into a mixture of isopentenyl diphosphate (IPP) and dimethylallyl diphosphate (DMAPP). Acts in the terminal step of the DOXP/MEP pathway for isoprenoid precursor biosynthesis. The chain is 4-hydroxy-3-methylbut-2-enyl diphosphate reductase from Wigglesworthia glossinidia brevipalpis.